A 397-amino-acid polypeptide reads, in one-letter code: uncharacterized protein (397 aa).

11 helical membrane passes run 9–29, 38–58, 85–105, 112–132, 148–168, 182–202, 226–246, 271–291, 310–330, 331–351, and 365–385; these read NAVL…GFLT, LLAS…GAQL, FLAA…VGGA, IFGI…ILIF, MGFI…PPVV, PIAI…FAGA, AILI…GVVS, VLFG…AAYT, WIIA…KPAA, VLVF…ALIL, and HPVF…ILSG.

It belongs to the NRAMP family.

The protein resides in the cell membrane. This is an uncharacterized protein from Haemophilus influenzae (strain ATCC 51907 / DSM 11121 / KW20 / Rd).